Consider the following 1486-residue polypeptide: Collagen alpha-1(II) chain (1486 aa).

The N-terminal stretch at 1-26 is a signal peptide; the sequence is MFSFVDSRTLVLFAATQVILLAVVRC. The propeptide at 27–183 is N-terminal propeptide; that stretch reads QDEEDVLDTG…PPGLGGNFAA (157 aa). Residues 36–94 form the VWFC domain; the sequence is GSCVQHGQRYSDKDVWKPEPCQICVCDTGTVLCDDIICEESKDCPNAEIPFGECCPICP. The segment at 100-1241 is disordered; it reads TSSGQGVLKG…EKGPDPMRYM (1142 aa). Basic and acidic residues-rich tracts occupy residues 110 to 121 and 138 to 159; these read QKGEPGDIKDVL and SRGERGDKGEKGAPGPRGRDGE. Positions 163–175 are enriched in pro residues; it reads PGNPGPVGPPGPP. The span at 194–205 shows a compositional bias: low complexity; the sequence is GGAQMGVMQGPM. A triple-helical region region spans residues 203–1216; sequence GPMGPMGPRG…PGPPGPPGPP (1014 aa). Residues 210–219 are compositionally biased toward pro residues; that stretch reads PRGPPGPTGA. Residues 220–231 show a composition bias toward low complexity; that stretch reads PGPQGFQGNPGE. A compositionally biased stretch (gly residues) spans 233-242; the sequence is GEPGAGGPMG. A compositionally biased stretch (basic and acidic residues) spans 253–267; the sequence is PGDDGEAGKPGKSGE. The span at 308-317 shows a compositional bias: gly residues; sequence GAKGEGGATG. Composition is skewed to low complexity over residues 318–330, 337–346, 363–373, and 393–421; these read EAGSPGPMGPRGL, PGSSGAAGAR, PAGAPGFPGAP, and PRGESGTPGSPGPAGASGNPGTDGIPGAK. A compositionally biased stretch (gly residues) spans 422-431; that stretch reads GSSGGPGIAG. Pro residues predominate over residues 435–444; it reads FPGPRGPPGP. 2 stretches are compositionally biased toward low complexity: residues 478-487 and 498-517; these read AGPQGAPGPA and EPGAAGPNGPPGERGAPGNR. Residues 536–551 show a composition bias toward gly residues; the sequence is GVPGLGGPKGGNGDPG. 2 positions are modified to 4-hydroxyproline: Pro-661 and Pro-670. Pro-672 carries the 3-hydroxyproline modification. 4-hydroxyproline occurs at positions 673 and 676. The span at 708–732 shows a compositional bias: low complexity; that stretch reads ERGSSGPQGLQGPRGLPGTPGTDGP. The span at 766–777 shows a compositional bias: basic and acidic residues; sequence KGDRGDTGEKGP. Over residues 891 to 904 the composition is skewed to low complexity; that stretch reads AQGPAGATGFPGAA. 3 positions are modified to 4-hydroxyproline: Pro-910, Pro-916, and Pro-922. A compositionally biased stretch (pro residues) spans 913-922; sequence NGNPGPPGPP. The segment covering 936–955 has biased composition (low complexity); it reads DAGPPGRAGDPGLQGAAGAP. A compositionally biased stretch (gly residues) spans 1007–1016; that stretch reads GKQGGPGSSG. The segment covering 1102–1116 has biased composition (low complexity); sequence SGPAGARGLAGPQGP. A compositionally biased stretch (basic and acidic residues) spans 1117–1131; sequence RGDKGEAGEAGERGQ. The residue at position 1146 (Pro-1146) is a 3-hydroxyproline. Positions 1150 to 1159 are enriched in low complexity; it reads AGDQGATGPA. 3-hydroxyproline is present on Pro-1188. Pro-1189 carries the 4-hydroxyproline modification. Over residues 1201–1218 the composition is skewed to pro residues; the sequence is SGPPGQPGPPGPPGPPGP. At Pro-1203 the chain carries 3-hydroxyproline. 4-hydroxyproline occurs at positions 1204 and 1207. Pro-1209 is subject to 3-hydroxyproline. A 4-hydroxyproline mark is found at Pro-1210 and Pro-1213. Pro-1215 bears the 3-hydroxyproline mark. Pro-1216 is modified (4-hydroxyproline). The segment at 1217-1243 is nonhelical region (C-terminal); that stretch reads GPGIDMSAFAGLSQPEKGPDPMRYMRA. Positions 1244–1486 are cleaved as a propeptide — C-terminal propeptide; the sequence is DQASNSLPVD…GVDIGPVCFL (243 aa). The Fibrillar collagen NC1 domain occupies 1252–1486; that stretch reads VDVEATLKSL…GVDIGPVCFL (235 aa). 3 disulfide bridges follow: Cys-1282–Cys-1314, Cys-1322–Cys-1484, and Cys-1392–Cys-1437. 5 residues coordinate Ca(2+): Asp-1300, Asn-1302, Gln-1303, Cys-1305, and Asp-1308. The N-linked (GlcNAc...) asparagine glycan is linked to Asn-1387.

This sequence belongs to the fibrillar collagen family. As to quaternary structure, homotrimers of alpha 1(II) chains. In terms of processing, contains mostly 4-hydroxyproline. Prolines at the third position of the tripeptide repeating unit (G-X-P) are 4-hydroxylated in some or all of the chains. Post-translationally, contains 3-hydroxyproline at a few sites. This modification occurs on the first proline residue in the sequence motif Gly-Pro-Hyp, where Hyp is 4-hydroxyproline. Lysine residues at the third position of the tripeptide repeating unit (G-X-Y) are 5-hydroxylated in some or all of the chains. In terms of processing, O-glycosylated on hydroxylated lysine residues. The O-linked glycan consists of a Glc-Gal disaccharide.

It localises to the secreted. The protein resides in the extracellular space. Its subcellular location is the extracellular matrix. In terms of biological role, type II collagen is specific for cartilaginous tissues. It is essential for the normal embryonic development of the skeleton, for linear growth and for the ability of cartilage to resist compressive forces. This Xenopus laevis (African clawed frog) protein is Collagen alpha-1(II) chain.